The sequence spans 39 residues: Photosystem II reaction center protein Y (39 aa).

The helical transmembrane segment at 7 to 25 (LLIVLLPILAAAGWAVFNI) threads the bilayer.

It belongs to the PsbY family. In terms of assembly, PSII is composed of 1 copy each of membrane proteins PsbA, PsbB, PsbC, PsbD, PsbE, PsbF, PsbH, PsbI, PsbJ, PsbK, PsbL, PsbM, PsbT, PsbX, PsbY, PsbZ, Psb30/Ycf12, peripheral proteins PsbO, CyanoQ (PsbQ), PsbU, PsbV and a large number of cofactors. It forms dimeric complexes.

The protein resides in the cellular thylakoid membrane. Functionally, loosely associated component of the core of photosystem II (PSII), it is not always seen in crystals. PSII is a light-driven water plastoquinone oxidoreductase, using light energy to abstract electrons from H(2)O, generating a proton gradient subsequently used for ATP formation. The polypeptide is Photosystem II reaction center protein Y (Trichodesmium erythraeum (strain IMS101)).